The primary structure comprises 690 residues: Putative glycerophosphocholine phosphodiesterase GPCPD1 homolog 1 (690 aa).

In terms of domain architecture, CBM20 spans 1–122 (MDQDYKAHFK…RKNITDQFGS (122 aa)). Residues 344–654 (MLQIGHRGMG…DRIGEDEVLK (311 aa)) enclose the GP-PDE domain. Positions 670–690 (ARSQHNSRSPSMSRRCMSTVE) are disordered. Residues 676–690 (SRSPSMSRRCMSTVE) show a composition bias toward low complexity.

The protein belongs to the glycerophosphoryl diester phosphodiesterase family.

The protein is Putative glycerophosphocholine phosphodiesterase GPCPD1 homolog 1 of Caenorhabditis elegans.